The primary structure comprises 83 residues: MSSGGLLLLLGLLTLWEGLTPVSSKDRPNFCHLPHDPGPCKGNFQAFYYHPVRRTCLEFIYGGCQGNPNNFKTIDECKRTCAA.

The signal sequence occupies residues 1-24; the sequence is MSSGGLLLLLGLLTLWEGLTPVSS. In terms of domain architecture, BPTI/Kunitz inhibitor spans 31–81; that stretch reads CHLPHDPGPCKGNFQAFYYHPVRRTCLEFIYGGCQGNPNNFKTIDECKRTC. Disulfide bonds link cysteine 31–cysteine 81, cysteine 40–cysteine 64, and cysteine 56–cysteine 77.

It belongs to the venom Kunitz-type family. Expressed by the venom gland.

It is found in the secreted. Its function is as follows. Serine protease inhibitor. The chain is Kunitz-type serine protease inhibitor mulgin-5 from Pseudechis australis (Mulga snake).